Here is a 388-residue protein sequence, read N- to C-terminus: Galactokinase (388 aa).

33-36 is a substrate binding site; it reads EHTD. Residues serine 67 and 125 to 131 each bind ATP; that span reads GAGLSSS. Residues serine 131 and glutamate 163 each contribute to the Mg(2+) site. Aspartate 175 functions as the Proton acceptor in the catalytic mechanism. Tyrosine 225 contacts substrate.

It belongs to the GHMP kinase family. GalK subfamily.

Its subcellular location is the cytoplasm. The catalysed reaction is alpha-D-galactose + ATP = alpha-D-galactose 1-phosphate + ADP + H(+). Its pathway is carbohydrate metabolism; galactose metabolism. Functionally, catalyzes the transfer of the gamma-phosphate of ATP to D-galactose to form alpha-D-galactose-1-phosphate (Gal-1-P). In Limosilactobacillus fermentum (strain NBRC 3956 / LMG 18251) (Lactobacillus fermentum), this protein is Galactokinase.